A 234-amino-acid polypeptide reads, in one-letter code: MSLLHQARFFTTVNHLRDLPATAVPEVAFAGRSNAGKSTAINVLCNQKRLAFSSKTPGRTQHINYFSVMPAKALDPLGFLVDLPGYGYAQVPGEAKSHWEHLLGDYIQTRSQLAGLVIMMDARRPFTDLDCQMVEWFLPTGKPIHVLLTKADKLTNNDASRALMSARKVLAGYQAQIEGEVSLTVQLFSSLKRRGIEEAQRTVAGWLCLPEAMPPSPDAEPAKKTPSPDAQRGE.

The region spanning Ala-23–Leu-209 is the EngB-type G domain. GTP-binding positions include Gly-31–Ser-38, Gly-58–His-62, Asp-82–Gly-85, Thr-149–Asp-152, and Leu-187–Ser-190. Residues Ser-38 and Thr-60 each contribute to the Mg(2+) site. Residues Pro-210–Glu-234 form a disordered region.

This sequence belongs to the TRAFAC class TrmE-Era-EngA-EngB-Septin-like GTPase superfamily. EngB GTPase family. Mg(2+) serves as cofactor.

In terms of biological role, necessary for normal cell division and for the maintenance of normal septation. The sequence is that of Probable GTP-binding protein EngB from Ralstonia nicotianae (strain ATCC BAA-1114 / GMI1000) (Ralstonia solanacearum).